Consider the following 433-residue polypeptide: Eukaryotic peptide chain release factor subunit 1 (433 aa).

At Gln-182 the chain carries N5-methylglutamine. Ser-425 is subject to Phosphoserine.

It belongs to the eukaryotic release factor 1 family. As to quaternary structure, component of the eRF1-eRF3-GTP ternary complex, composed of sup45/eRF1, sup35/eRF3 and GTP.

It is found in the cytoplasm. Functionally, component of the eRF1-eRF3-GTP ternary complex, a ternary complex that mediates translation termination in response to the termination codons. The eRF1-eRF3-GTP complex binds to a stop codon in the ribosomal A-site. Sup45/eRF1 is responsible for stop codon recognition and inducing hydrolysis of peptidyl-tRNA. Following GTP hydrolysis by sup35/eRF3, sup35/eRF3 dissociates, permitting sup45/eRF1 to accommodate fully in the A-site. The protein is Eukaryotic peptide chain release factor subunit 1 (sup45) of Schizosaccharomyces pombe (strain 972 / ATCC 24843) (Fission yeast).